We begin with the raw amino-acid sequence, 648 residues long: ATPase family AAA domain-containing protein 3B (648 aa).

2 disordered regions span residues 1 to 54 and 111 to 134; these read MSWL…DPTG and QAEE…QYQD. Ser-2 bears the N-acetylserine mark. Over 2-246 the chain is Mitochondrial intermembrane; sequence SWLFGVNKGP…FRAFVTDRDK (245 aa). The segment covering 17–26 has biased composition (pro residues); that stretch reads GPPPPLPPAQ. Composition is skewed to basic and acidic residues over residues 32-48 and 111-125; these read GGDR…DKWS and QAEE…ETRQ. A coiled-coil region spans residues 69 to 214; it reads RYAKEALNLA…DIIREQIRLK (146 aa). An intramembrane region (helical) is located at residues 247–264; sequence VTATVAGLTLLAVGVYSA. Residues 265–648 are Mitochondrial intermembrane-facing; it reads KNATAVTGRF…PFCPPGHPLL (384 aa). 352-359 contributes to the ATP binding site; the sequence is GPPGTGKT. N6-acetyllysine is present on residues Lys-427 and Lys-495.

Belongs to the AAA ATPase family. Forms heterooligomers with ATAD3A. Interacts with components of the mitochondrial ribosome, including MRPL11 and MRPS18B, and with other proteins involved in mitochondrial RNA metabolism, possibly via interaction with ATAD3A. Interacts with GADD45GIP1. As to expression, tends to be down-regulated in differentiated cells and re-expressed in pluripotent stem cells or cancer cells (at protein level).

It localises to the mitochondrion inner membrane. Functionally, may play a role in a mitochondrial network organization typical for stem cells, characterized by reduced mitochondrial metabolism, low mtDNA copies and fragmentated mitochondrial network. May act by suppressing ATAD3A function, interfering with ATAD3A interaction with matrix nucleoid complexes. The chain is ATPase family AAA domain-containing protein 3B (ATAD3B) from Homo sapiens (Human).